A 120-amino-acid polypeptide reads, in one-letter code: Phosphoribosyl-ATP pyrophosphatase (120 aa).

The segment at 97–120 is disordered; sequence REGTSGLVEKASRPAKKDSGTADS. Residues 106 to 120 show a composition bias toward basic and acidic residues; that stretch reads KASRPAKKDSGTADS.

The protein belongs to the PRA-PH family.

The protein localises to the cytoplasm. The enzyme catalyses 1-(5-phospho-beta-D-ribosyl)-ATP + H2O = 1-(5-phospho-beta-D-ribosyl)-5'-AMP + diphosphate + H(+). Its pathway is amino-acid biosynthesis; L-histidine biosynthesis; L-histidine from 5-phospho-alpha-D-ribose 1-diphosphate: step 2/9. The protein is Phosphoribosyl-ATP pyrophosphatase of Rhodopirellula baltica (strain DSM 10527 / NCIMB 13988 / SH1).